The primary structure comprises 1061 residues: Ceruloplasmin (1061 aa).

Positions 1 to 19 (MKFLLLSTFIFLYSSLALA) are cleaved as a signal peptide. 6 Plastocyanin-like domains span residues 20–199 (RDKH…LILC), 208–356 (KEKN…VRDC), 369–555 (HVRH…MKIC), 565–713 (RQKD…VNQC), 725–895 (GERT…LIVC), and 903–1057 (FSPK…VEQE). Positions 55, 64, and 67 each coordinate Na(+). His120 and His122 together coordinate Cu(2+). His120 contributes to the O2 binding site. Ca(2+) is bound at residue Lys128. N-linked (GlcNAc...) asparagine glycosylation occurs at Asn138. The Ca(2+) site is built by Gln143, Asp146, and Asp147. An intrachain disulfide couples Cys173 to Cys199. Positions 179 and 181 each coordinate Cu(2+). His179 contacts O2. Asn226 carries an N-linked (GlcNAc...) asparagine glycan. Residue Ser255 participates in Na(+) binding. Cys275 and Cys356 form a disulfide bridge. Positions 294, 337, and 342 each coordinate Cu(2+). The N-linked (GlcNAc...) asparagine glycan is linked to Asn396. Na(+) is bound by residues Phe407, Gly416, and Tyr419. A disulfide bridge connects residues Cys529 and Cys555. N-linked (GlcNAc...) asparagine glycosylation is present at Asn583. Ser612 lines the Na(+) pocket. An intrachain disulfide couples Cys632 to Cys713. Cu(2+) contacts are provided by His651, Cys694, His699, and Met704. Cys694 functions as the Nucleophile; for glutathione peroxidase activity in the catalytic mechanism. Asn757 is a glycosylation site (N-linked (GlcNAc...) asparagine). Na(+) contacts are provided by Phe762, Gly771, and Tyr774. Cys869 and Cys895 are disulfide-bonded. Residue Asn921 is glycosylated (N-linked (GlcNAc...) asparagine). Ser950 is a binding site for Na(+). Cu(2+) contacts are provided by His989, His992, His994, His1034, Cys1035, His1036, His1040, and Met1045. Residues His992 and His994 each contribute to the O2 site. His1036 lines the O2 pocket.

Belongs to the multicopper oxidase family. In terms of assembly, found in a complex with MPO and LTF; interacts directly with MPO and LTF, which allows Fe(3+) incorporation into LTF, activation of CP ferroxidase activity and protection of CP antioxidant properties by MPO. It depends on Cu(2+) as a cofactor. Expressed in many tissues, including liver, eye and brain.

The protein localises to the secreted. It catalyses the reaction 4 Fe(2+) + O2 + 4 H(+) = 4 Fe(3+) + 2 H2O. The enzyme catalyses 4 Cu(+) + O2 + 4 H(+) = 4 Cu(2+) + 2 H2O. The catalysed reaction is a hydroperoxide + 2 glutathione = an alcohol + glutathione disulfide + H2O. It carries out the reaction 4 nitric oxide + O2 + 2 H2O = 4 nitrite + 4 H(+). It catalyses the reaction 2 glutathione + H2O2 = glutathione disulfide + 2 H2O. Its function is as follows. Multifunctional blue, copper-binding (6-7 atoms per molecule) glycoprotein. It has ferroxidase activity oxidizing Fe(2+) to Fe(3+) without releasing radical oxygen species. It is involved in iron transport across the cell membrane. Copper ions provide a large number of enzymatic activites. Oxidizes highly toxic ferrous ions to the ferric state for further incorporation onto apo-transferrins, catalyzes Cu(+) oxidation and promotes the oxidation of biogenic amines such as norepinephrin and serotonin. Provides Cu(2+) ions for the ascorbate-mediated deaminase degradation of the heparan sulfate chains of GPC1. Has glutathione peroxidase-like activity, can remove both hydrogen peroxide and lipid hydroperoxide in the presence of thiols. Also shows NO-oxidase and NO2 synthase activities that determine endocrine NO homeostasis. The protein is Ceruloplasmin (Cp) of Mus musculus (Mouse).